We begin with the raw amino-acid sequence, 1177 residues long: Phospholipid-transporting ATPase IF (1177 aa).

The Cytoplasmic segment spans residues 1-55 (MWRWIRQQLGFDPPHQSDTRTIYVANRFPQNGLYTPQKFIDNRIISSKYTVWNFV). Residues 56 to 77 (PKNLFEQFRRVANFYFLIIFLV) form a helical membrane-spanning segment. At 78–82 (QLMID) the chain is on the extracellular side. A helical transmembrane segment spans residues 83 to 104 (TPTSPVTSGLPLFFVITVTAIK). The Cytoplasmic segment spans residues 105-289 (QGYEDWLRHN…SAVEKSMNTF (185 aa)). The helical transmembrane segment at 290-311 (LIIYLVILISEAVISTILKYTW) threads the bilayer. Residues 312–341 (QAEEKWDEPWYNQKTEHQRNSSKILRFISD) are Extracellular-facing. Residues 342 to 359 (FLAFLVLYNFIIPISLYV) form a helical membrane-spanning segment. Over 360 to 876 (TVEMQKFLGS…HGHFYYIRIA (517 aa)) the chain is Cytoplasmic. Asp407 (4-aspartylphosphate intermediate) is an active-site residue. 12 residues coordinate ATP: Asp407, Lys408, Thr409, Glu531, Phe572, Lys595, Arg626, Thr706, Gly707, Asp708, Arg794, and Lys800. Asp407 contributes to the Mg(2+) binding site. Thr409 lines the Mg(2+) pocket. Asp821 serves as a coordination point for Mg(2+). 2 residues coordinate ATP: Asn824 and Asp825. Asp825 serves as a coordination point for Mg(2+). Residues 877 to 898 (TLVQYFFYKNVCFITPQFLYQF) traverse the membrane as a helical segment. The Extracellular segment spans residues 899–910 (YCLFSQQTLYDS). A helical membrane pass occupies residues 911-930 (VYLTLYNICFTSLPILIYSL). The Cytoplasmic portion of the chain corresponds to 931-960 (LEQHVDPHVLQNKPTLYRDISKNRLLSIKT). A helical transmembrane segment spans residues 961-982 (FLYWTILGFSHAFIFFFGSYLL). The Extracellular portion of the chain corresponds to 983–997 (IGKDTSLLGNGQMFG). The chain crosses the membrane as a helical span at residues 998-1020 (NWTFGTLVFTVMVITVTVKMALE). Topologically, residues 1021-1025 (THFWT) are cytoplasmic. A helical transmembrane segment spans residues 1026–1047 (WINHLVTWGSIIFYFVFSLFYG). Topologically, residues 1048 to 1065 (GILWPFLGSQNMYFVFIQ) are extracellular. The helical transmembrane segment at 1066–1090 (LLSSGSAWFAIILMVVTCLFLDIIK) threads the bilayer. Topologically, residues 1091-1177 (KVFDRHLHPT…TLSTMDSSTC (87 aa)) are cytoplasmic. A Phosphoserine modification is found at Ser1154.

This sequence belongs to the cation transport ATPase (P-type) (TC 3.A.3) family. Type IV subfamily. Component of a P4-ATPase flippase complex which consists of a catalytic alpha subunit ATP11B and an accessory beta subunit TMEM30A. Mg(2+) is required as a cofactor.

The protein localises to the recycling endosome membrane. The protein resides in the early endosome. It is found in the endoplasmic reticulum. Its subcellular location is the golgi apparatus. It localises to the trans-Golgi network. The catalysed reaction is ATP + H2O + phospholipidSide 1 = ADP + phosphate + phospholipidSide 2.. It carries out the reaction a 1,2-diacyl-sn-glycero-3-phospho-L-serine(out) + ATP + H2O = a 1,2-diacyl-sn-glycero-3-phospho-L-serine(in) + ADP + phosphate + H(+). It catalyses the reaction a 1,2-diacyl-sn-glycero-3-phosphoethanolamine(out) + ATP + H2O = a 1,2-diacyl-sn-glycero-3-phosphoethanolamine(in) + ADP + phosphate + H(+). The ATPase activity is up-regulated by aminophospholipids PS and PE. Its function is as follows. Catalytic component of a P4-ATPase flippase complex which catalyzes the hydrolysis of ATP coupled to the transport of aminophospholipids, phosphatidylserines (PS) and phosphatidylethanolamines (PE), from the outer to the inner leaflet of intracellular membranes. May contribute to the maintenance of membrane lipid asymmetry in endosome compartment. In Homo sapiens (Human), this protein is Phospholipid-transporting ATPase IF (ATP11B).